A 291-amino-acid polypeptide reads, in one-letter code: N-acetylmannosamine kinase (291 aa).

Residues 5–12 (AVDIGGTK) and 132–139 (GVGGGIVV) contribute to the ATP site. Zn(2+)-binding residues include histidine 156, cysteine 166, cysteine 168, and cysteine 173.

Belongs to the ROK (NagC/XylR) family. NanK subfamily. Homodimer.

The enzyme catalyses an N-acyl-D-mannosamine + ATP = an N-acyl-D-mannosamine 6-phosphate + ADP + H(+). The protein operates within amino-sugar metabolism; N-acetylneuraminate degradation; D-fructose 6-phosphate from N-acetylneuraminate: step 2/5. Its function is as follows. Catalyzes the phosphorylation of N-acetylmannosamine (ManNAc) to ManNAc-6-P. The chain is N-acetylmannosamine kinase (nanK2) from Escherichia coli O6:H1 (strain CFT073 / ATCC 700928 / UPEC).